A 224-amino-acid chain; its full sequence is Peroxiredoxin-like 2A (224 aa).

Residues 14–112 (MWSVGLGAVG…SKLGVPLYAV (99 aa)) form a thioredoxin fold region. Residue U85 is a non-standard amino acid, selenocysteine. C88 functions as the Redox-active in the catalytic mechanism.

Belongs to the peroxiredoxin-like PRXL2 family. PRXL2A subfamily.

It is found in the cytoplasm. In terms of biological role, involved in redox regulation of the cell. Acts as an antioxidant. Inhibits TNFSF11-induced NFKB1 and JUN activation and osteoclast differentiation. May affect bone resorption and help to maintain bone mass. This chain is Peroxiredoxin-like 2A (PRXL2A), found in Gallus gallus (Chicken).